Consider the following 569-residue polypeptide: MDSSTATAMTAPFIDPTDHVNLKTDTDASENRRMGNYKPSIWNYDFLQSLATHHNIVEERHLKLAEKLKGQVKFMFGAPMEPLAKLELVDVVQRLGLNHLFETEIKEALFSIYKDGSNGWWFGHLHATSLRFRLLRQCGLFIPQDVFKTFQNKTGEFDMKLCDNVKGLLSLYEASYLGWKGENILDEAKAFTTKCLKSAWENISEKWLAKRVKHALALPLHWRVPRIEARWFIEAYEQEANMNPTLLKLAKLDFNMVQSIHQKEIGELARWWVTTGLDKLAFARNNLLQSYMWSCAIASDPKFKLARETIVEIGSVLTVVDDGYDVYGSIDELDLYTSSVERWSCVEIDKLPNTLKLIFMSMFNKTNEVGLRVQHERGYNSIPTFIKAWVEQCKSYQKEARWFHGGHTPPLEEYSLNGLVSIGFPLLLITGYVAIAENEAALDKVHPLPDLLHYSSLLSRLINDIGTSPDEMARGDNLKSIHCYMNETGASEEVAREHIKGVIEENWKILNQCCFDQSQFQEPFITFNLNSVRGSHFFYEFGDGFGVTDSWTKVDMKSVLIDPIPLGEE.

Residues R284, D321, D325, and R460 each coordinate (2E)-geranyl diphosphate. 2 residues coordinate Mg(2+): D321 and D325. The DDXXD motif motif lies at 321 to 325 (DDGYD). 3 residues coordinate Mg(2+): N463, T467, and E471.

It belongs to the terpene synthase family. Tpsb subfamily. The cofactor is Mg(2+). Mn(2+) is required as a cofactor.

The catalysed reaction is (2E,6E)-farnesyl diphosphate = (1S,5S,6R)-alpha-bergamotene + diphosphate. The enzyme catalyses (2E,6E)-farnesyl diphosphate = (+)-alpha-santalene + diphosphate. It catalyses the reaction (2E,6E)-farnesyl diphosphate = (-)-beta-santalene + diphosphate. Its function is as follows. Catalyzes a mixture of sesquiterpenoids from (2E,6E)-farnesyl diphosphate in fragrance biosynthesis. Catalyzes the formation of alpha-santalene, beta-santalene, epi-beta-santalene and exo-alpha-bergamotene, as well as traces of alpha-farnesene and beta-farnesene. Also acts with (Z,Z)-farnesyl diphosphate isomer, producing alpha-endo-bergamotene, alpha-santalene, (Z)-beta-farnesene, epi-beta-santalene, and beta-santalene. This chain is Santalene synthase, found in Santalum album (White sandalwood).